Reading from the N-terminus, the 513-residue chain is Varicidin biosynthesis cluster-specific transcription factor (513 aa).

A DNA-binding region (zn(2)-C6 fungal-type) is located at residues cysteine 16–cysteine 54. Disordered regions lie at residues arginine 58 to asparagine 92 and valine 97 to lysine 116. Positions serine 67 to serine 76 are enriched in low complexity. Over residues lysine 77 to asparagine 92 the composition is skewed to polar residues.

The protein resides in the nucleus. Its function is as follows. Transcription factor that regulates the expression of the gene cluster that mediates the biosynthesis of varicidin A, an antifungal natural product containing a cis-octahydrodecalin core. The sequence is that of Varicidin biosynthesis cluster-specific transcription factor from Talaromyces variabilis (Penicillium variabile).